The primary structure comprises 343 residues: GTPase Obg (343 aa).

An Obg domain is found at 1-159; it reads MKFVDSASIF…LQLDMELKLM (159 aa). The interval 121–144 is disordered; it reads GHGGRGNQHFATSTNQAPRRSEPG. Over residues 129–138 the composition is skewed to polar residues; that stretch reads HFATSTNQAP. Residues 160–323 enclose the OBG-type G domain; it reads ADVGLVGFPN…LKDELWREVS (164 aa). GTP is bound by residues 166–173, 191–195, 213–216, 280–283, and 304–306; these read GFPNAGKS, FTTLV, DIPG, TKMD, and SSV. 2 residues coordinate Mg(2+): serine 173 and threonine 193. Positions 322–343 are disordered; it reads VSMRDRPEESSDPEGEGDGGTP. Residues 331–343 show a composition bias toward acidic residues; sequence SSDPEGEGDGGTP.

It belongs to the TRAFAC class OBG-HflX-like GTPase superfamily. OBG GTPase family. As to quaternary structure, monomer. Mg(2+) serves as cofactor.

The protein resides in the cytoplasm. In terms of biological role, an essential GTPase which binds GTP, GDP and possibly (p)ppGpp with moderate affinity, with high nucleotide exchange rates and a fairly low GTP hydrolysis rate. Plays a role in control of the cell cycle, stress response, ribosome biogenesis and in those bacteria that undergo differentiation, in morphogenesis control. The polypeptide is GTPase Obg (Chlorobium luteolum (strain DSM 273 / BCRC 81028 / 2530) (Pelodictyon luteolum)).